The following is a 27-amino-acid chain: Ferric reductase B (27 aa).

As to quaternary structure, homodimer. The cofactor is FAD.

The enzyme catalyses 2 a Fe(II)-siderophore + NAD(+) + H(+) = 2 a Fe(III)-siderophore + NADH. In terms of biological role, reductase activity that acts on Fe(3+)-chelates and uses both NADH and NADPH as electron donors. May play a role in iron uptake. The chain is Ferric reductase B (ferB) from Paracoccus denitrificans.